Here is an 89-residue protein sequence, read N- to C-terminus: MAVTTDQKSQVILDYQRVAGDTGSPEVQVAILTTRINSLIDHFKEHVKDHHSRRGLLRMVSRRRKLLDYLKSRNSDNYRILIERLGLRK.

It belongs to the universal ribosomal protein uS15 family. As to quaternary structure, part of the 30S ribosomal subunit. Forms a bridge to the 50S subunit in the 70S ribosome, contacting the 23S rRNA.

Functionally, one of the primary rRNA binding proteins, it binds directly to 16S rRNA where it helps nucleate assembly of the platform of the 30S subunit by binding and bridging several RNA helices of the 16S rRNA. Forms an intersubunit bridge (bridge B4) with the 23S rRNA of the 50S subunit in the ribosome. This chain is Small ribosomal subunit protein uS15, found in Nitrosomonas eutropha (strain DSM 101675 / C91 / Nm57).